The sequence spans 369 residues: Flagellar P-ring protein (369 aa).

The first 22 residues, 1–22 (MFNVRQLIATTLLLSCAFAAQA), serve as a signal peptide directing secretion.

This sequence belongs to the FlgI family. As to quaternary structure, the basal body constitutes a major portion of the flagellar organelle and consists of four rings (L,P,S, and M) mounted on a central rod.

It localises to the periplasm. It is found in the bacterial flagellum basal body. Its function is as follows. Assembles around the rod to form the L-ring and probably protects the motor/basal body from shearing forces during rotation. This Pseudomonas putida (strain ATCC 47054 / DSM 6125 / CFBP 8728 / NCIMB 11950 / KT2440) protein is Flagellar P-ring protein.